Consider the following 299-residue polypeptide: Putative fructokinase (299 aa).

T130 contacts ATP. Residues H153, C168, H171, and C174 each coordinate Zn(2+). ATP-binding positions include P182 and 230–234 (GVMQQ).

This sequence belongs to the ROK (NagC/XylR) family. It depends on Mg(2+) as a cofactor.

It carries out the reaction D-fructose + ATP = D-fructose 6-phosphate + ADP + H(+). Its activity is regulated as follows. Inhibited by zinc ions. Functionally, seems to be involved in the degradation of glucomannan. The chain is Putative fructokinase (gmuE) from Bacillus subtilis (strain 168).